Reading from the N-terminus, the 1383-residue chain is Cell surface hyaluronidase CEMIP2 (1383 aa).

The segment at 1 to 50 (MYATDSRGHSPAFLQPQNGNSRHPSGYVPGKVVPLRPPPPPKSQASAKFT) is disordered. The Cytoplasmic portion of the chain corresponds to 1 to 82 (MYATDSRGHS…SQKQKRHKNT (82 aa)). Phosphoserine occurs at positions 10 and 63. The helical; Signal-anchor for type II membrane protein transmembrane segment at 83–103 (FICFAITSFSFFIALAIILGI) threads the bilayer. Over 104-1383 (SSKYAPDENC…ELLKQASKAH (1280 aa)) the chain is Extracellular. The G8 domain maps to 121-245 (RNWDPGQDSA…RKASWTLLAR (125 aa)). N-linked (GlcNAc...) asparagine glycans are attached at residues asparagine 248 and asparagine 292. The GG-type lectin 1 domain maps to 255 to 412 (GSYTFEKDFS…VSLSGFRVEV (158 aa)). PbH1 repeat units lie at residues 669-691 (HPNN…WYLF), 711-733 (TPLG…FIDK), and 791-812 (GGDI…TFAS). Residues asparagine 914 and asparagine 1234 are each glycosylated (N-linked (GlcNAc...) asparagine). The GG-type lectin 2 domain occupies 1208–1366 (KSYLPVQFQS…LDEYGCPRAT (159 aa)).

Belongs to the CEMIP family. Widely expressed.

The protein localises to the cell membrane. It catalyses the reaction Random hydrolysis of (1-&gt;4)-linkages between N-acetyl-beta-D-glucosamine and D-glucuronate residues in hyaluronate.. Its function is as follows. Cell surface hyaluronidase that mediates the initial cleavage of extracellular high-molecular-weight hyaluronan into intermediate-size hyaluronan of approximately 10-5 kDa fragments. Very specific to hyaluronan; not able to cleave chondroitin sulfate or dermatan sulfate. Has an essential function in systemic hyaluronan catabolism and turnover and regulates cell adhesion and migration via hyaluronan degradation at focal adhesion sites. Acts as a regulator of angiogenesis and heart morphogenesis by mediating degradation of extracellular hyaluronan, thereby regulating VEGF signaling. This chain is Cell surface hyaluronidase CEMIP2, found in Homo sapiens (Human).